The chain runs to 323 residues: Beta-ketoacyl-[acyl-carrier-protein] synthase III (323 aa).

Active-site residues include C114 and H250. Positions 251-255 (QANIR) are ACP-binding. N280 is an active-site residue.

This sequence belongs to the thiolase-like superfamily. FabH family. In terms of assembly, homodimer.

The protein resides in the cytoplasm. It carries out the reaction malonyl-[ACP] + acetyl-CoA + H(+) = 3-oxobutanoyl-[ACP] + CO2 + CoA. It participates in lipid metabolism; fatty acid biosynthesis. Its function is as follows. Catalyzes the condensation reaction of fatty acid synthesis by the addition to an acyl acceptor of two carbons from malonyl-ACP. Catalyzes the first condensation reaction which initiates fatty acid synthesis and may therefore play a role in governing the total rate of fatty acid production. Possesses both acetoacetyl-ACP synthase and acetyl transacylase activities. Its substrate specificity determines the biosynthesis of branched-chain and/or straight-chain of fatty acids. This chain is Beta-ketoacyl-[acyl-carrier-protein] synthase III, found in Alkalilimnicola ehrlichii (strain ATCC BAA-1101 / DSM 17681 / MLHE-1).